Here is a 440-residue protein sequence, read N- to C-terminus: Methylthioribose-1-phosphate isomerase (440 aa).

The active-site Proton donor is the aspartate 285.

This sequence belongs to the eIF-2B alpha/beta/delta subunits family. MtnA subfamily.

The protein resides in the cytoplasm. Its subcellular location is the nucleus. The catalysed reaction is 5-(methylsulfanyl)-alpha-D-ribose 1-phosphate = 5-(methylsulfanyl)-D-ribulose 1-phosphate. It functions in the pathway amino-acid biosynthesis; L-methionine biosynthesis via salvage pathway; L-methionine from S-methyl-5-thio-alpha-D-ribose 1-phosphate: step 1/6. In terms of biological role, catalyzes the interconversion of methylthioribose-1-phosphate (MTR-1-P) into methylthioribulose-1-phosphate (MTRu-1-P). The sequence is that of Methylthioribose-1-phosphate isomerase (mri1) from Botryotinia fuckeliana (strain B05.10) (Noble rot fungus).